Here is a 590-residue protein sequence, read N- to C-terminus: Protein phosphatase PP2A regulatory subunit A (590 aa).

11 HEAT repeats span residues Pro-12–Glu-50, Leu-89–Tyr-127, Phe-206–His-244, Leu-246–Glu-284, Leu-285–Glu-323, Ile-324–Tyr-362, Leu-363–Ser-401, Leu-402–Lys-440, Ile-480–Gln-518, Ile-519–Ala-551, and Ile-562–Asp-590.

Belongs to the phosphatase 2A regulatory subunit A family. As to quaternary structure, PP2A exists in several trimeric forms, all of which consist of a core composed of a catalytic subunit associated with a 65 kDa (PR65) (Subunit A) and a 55 kDa (PR55) (Subunit B) regulatory subunit.

Its function is as follows. Phosphatase 2A affects a variety of biological processes in the cell such as transcription, cell cycle progression and cellular morphogenesis, and provides an initial identification of critical substrates for this phosphatase. The regulatory subunit may direct the catalytic subunit to distinct, albeit overlapping, subsets of substrates. This Schizosaccharomyces pombe (strain 972 / ATCC 24843) (Fission yeast) protein is Protein phosphatase PP2A regulatory subunit A (paa1).